The primary structure comprises 108 residues: MIYPILIFILAGLCEIGGGYLIWLWLRASQSPLFGLLGGILLISYGIVATFQVFPTFSRVYAAYGGVFIVMSILWGYVFDKQTPDKYDVLGAIVCIIGVLIMLLPDRS.

Transmembrane regions (helical) follow at residues Ile-5–Trp-25, Phe-34–Phe-54, Val-60–Asp-80, and Pro-84–Leu-104.

Belongs to the UPF0060 family.

It localises to the cell membrane. The protein is UPF0060 membrane protein Sca_1835 of Staphylococcus carnosus (strain TM300).